Reading from the N-terminus, the 601-residue chain is Aspartate--tRNA(Asp/Asn) ligase (601 aa).

Residue glutamate 187 participates in L-aspartate binding. The interval 211 to 214 (QQFK) is aspartate. 2 residues coordinate L-aspartate: arginine 233 and histidine 461. ATP is bound at residue 233-235 (RDE). ATP is bound at residue glutamate 495. Arginine 502 lines the L-aspartate pocket. 547 to 550 (GLDR) provides a ligand contact to ATP.

It belongs to the class-II aminoacyl-tRNA synthetase family. Type 1 subfamily. In terms of assembly, homodimer.

The protein resides in the cytoplasm. It carries out the reaction tRNA(Asx) + L-aspartate + ATP = L-aspartyl-tRNA(Asx) + AMP + diphosphate. Functionally, aspartyl-tRNA synthetase with relaxed tRNA specificity since it is able to aspartylate not only its cognate tRNA(Asp) but also tRNA(Asn). Reaction proceeds in two steps: L-aspartate is first activated by ATP to form Asp-AMP and then transferred to the acceptor end of tRNA(Asp/Asn). The protein is Aspartate--tRNA(Asp/Asn) ligase of Pelodictyon phaeoclathratiforme (strain DSM 5477 / BU-1).